The primary structure comprises 213 residues: Redox-sensing transcriptional repressor Rex (213 aa).

The H-T-H motif DNA-binding region spans 18–57; sequence LYYRFLKNLHASGKQRVSSAELSEAVKVDPATIRRDFSYF. 92-97 provides a ligand contact to NAD(+); the sequence is GVGNLG.

The protein belongs to the transcriptional regulatory Rex family. In terms of assembly, homodimer.

The protein resides in the cytoplasm. Its function is as follows. Modulates transcription in response to changes in cellular NADH/NAD(+) redox state. In Geobacillus kaustophilus (strain HTA426), this protein is Redox-sensing transcriptional repressor Rex.